Here is a 648-residue protein sequence, read N- to C-terminus: SRSF protein kinase 1 (648 aa).

The tract at residues Met-1–Glu-57 is disordered. The span at Ala-10–Ala-22 shows a compositional bias: basic residues. A compositionally biased stretch (acidic residues) spans Asp-40–Glu-57. Position 51 is a phosphoserine (Ser-51). The 567-residue stretch at Tyr-80 to Leu-646 folds into the Protein kinase domain. ATP is bound by residues Leu-86–Val-94 and Lys-109. Asp-213 acts as the Proton acceptor in catalysis. Disordered regions lie at residues Trp-238–Ile-354 and Pro-395–Gly-464. Basic residues predominate over residues Lys-265–Lys-276. 2 stretches are compositionally biased toward basic and acidic residues: residues Arg-277–Glu-288 and Asn-304–Leu-317. Phosphoserine is present on residues Ser-309, Ser-311, and Ser-333. 2 stretches are compositionally biased toward polar residues: residues Ser-333–Thr-343 and Ser-396–Glu-441. Thr-448 is modified (phosphothreonine). Phosphoserine is present on Ser-450. Ser-548 carries the phosphoserine; by CK2 modification.

Belongs to the protein kinase superfamily. CMGC Ser/Thr protein kinase family. In terms of assembly, monomer. Found in a multisubunit complex containing seven proteins, named toposome, which separates entangled circular chromatin DNA during chromosome segregation. Interacts with HHV-1 ICP27 protein. Interacts with DNAJC8 and AHSA1/AHA1 and this mediates formation of a complex with the Hsp70 /Hsp90 machinery. Binds to IGF2BP1, SYNCRIP, HNRNPA2B1 and HNRNPC. Interacts with SAFB/SAFB1 and SAFB2 which inhibits its activity. Mg(2+) is required as a cofactor. Predominantly expressed in the testis but is also present at lower levels in heart, spleen, liver, brain, kidney, lung and skeletal muscle. Present in all germinal cells in the seminiferous tubules but not in mature spermatozoa.

It is found in the cytoplasm. It localises to the nucleus. The protein localises to the nucleoplasm. Its subcellular location is the nucleus matrix. The protein resides in the microsome. It is found in the nucleus speckle. It localises to the chromosome. It carries out the reaction L-seryl-[protein] + ATP = O-phospho-L-seryl-[protein] + ADP + H(+). The catalysed reaction is L-threonyl-[protein] + ATP = O-phospho-L-threonyl-[protein] + ADP + H(+). Activated by phosphorylation on Ser-51 and Ser-548. Serine/arginine-rich protein-specific kinase which specifically phosphorylates its substrates at serine residues located in regions rich in arginine/serine dipeptides, known as RS domains and is involved in the phosphorylation of SR splicing factors and the regulation of splicing. Plays a central role in the regulatory network for splicing, controlling the intranuclear distribution of splicing factors in interphase cells and the reorganization of nuclear speckles during mitosis. Can influence additional steps of mRNA maturation, as well as other cellular activities, such as chromatin reorganization in somatic and sperm cells and cell cycle progression. Phosphorylates SFRS2, ZRSR2, LBR and PRM1. Phosphorylates SRSF1 using a directional (C-terminal to N-terminal) and a dual-track mechanism incorporating both processive phosphorylation (in which the kinase stays attached to the substrate after each round of phosphorylation) and distributive phosphorylation steps (in which the kinase and substrate dissociate after each phosphorylation event). The RS domain of SRSF1 binds first to a docking groove in the large lobe of the kinase domain of SRPK1. This induces certain structural changes in SRPK1 and/or RRM2 domain of SRSF1, allowing RRM2 to bind the kinase and initiate phosphorylation. The cycles continue for several phosphorylation steps in a processive manner (steps 1-8) until the last few phosphorylation steps (approximately steps 9-12). During that time, a mechanical stress induces the unfolding of the beta-4 motif in RRM2, which then docks at the docking groove of SRPK1. This also signals RRM2 to begin to dissociate, which facilitates SRSF1 dissociation after phosphorylation is completed. Can mediate hepatitis B virus (HBV) core protein phosphorylation. It plays a negative role in the regulation of HBV replication through a mechanism not involving the phosphorylation of the core protein but by reducing the packaging efficiency of the pregenomic RNA (pgRNA) without affecting the formation of the viral core particles. Can induce splicing of exon 10 in MAPT/TAU. The protein is SRSF protein kinase 1 of Mus musculus (Mouse).